A 479-amino-acid polypeptide reads, in one-letter code: Ribosomal RNA small subunit methyltransferase F (479 aa).

Residues 125–131 (AAAPGSK), glutamate 149, aspartate 176, and aspartate 194 contribute to the S-adenosyl-L-methionine site. Cysteine 247 functions as the Nucleophile in the catalytic mechanism.

Belongs to the class I-like SAM-binding methyltransferase superfamily. RsmB/NOP family.

It is found in the cytoplasm. It catalyses the reaction cytidine(1407) in 16S rRNA + S-adenosyl-L-methionine = 5-methylcytidine(1407) in 16S rRNA + S-adenosyl-L-homocysteine + H(+). Its function is as follows. Specifically methylates the cytosine at position 1407 (m5C1407) of 16S rRNA. The sequence is that of Ribosomal RNA small subunit methyltransferase F from Escherichia coli (strain ATCC 8739 / DSM 1576 / NBRC 3972 / NCIMB 8545 / WDCM 00012 / Crooks).